Reading from the N-terminus, the 206-residue chain is Large ribosomal subunit protein uL4 (206 aa).

The tract at residues 43–78 (ARSGNRKQKDREEVKHTTKKPWRQKGTGRARAGMSS) is disordered. A compositionally biased stretch (basic and acidic residues) spans 49–58 (KQKDREEVKH). Residues 59–70 (TTKKPWRQKGTG) are compositionally biased toward basic residues.

It belongs to the universal ribosomal protein uL4 family. As to quaternary structure, part of the 50S ribosomal subunit.

In terms of biological role, one of the primary rRNA binding proteins, this protein initially binds near the 5'-end of the 23S rRNA. It is important during the early stages of 50S assembly. It makes multiple contacts with different domains of the 23S rRNA in the assembled 50S subunit and ribosome. Its function is as follows. Forms part of the polypeptide exit tunnel. In Ralstonia pickettii (strain 12J), this protein is Large ribosomal subunit protein uL4.